Here is a 411-residue protein sequence, read N- to C-terminus: MDAIILCAGKGTRLYPITESRPKPMIPIAGKPILEHIIEKIENYVEKIYLVVGFEKEKIIEYFKENPKIEYILQEKQLGTGHAVLTAKNFIKDDFLVLNGDIIFEDSIDEILVYENAVALSKVGHPENFGVVELGYDNKIINLLEKPKKEELPSNLINAGIYKLQNNVFDILENLVPSERGEIELTDALKKLIENGKLHGIELNGYWNDIGHPWDVLSANNRFLNKIISKVSGKIENNVSITGNVIIEEGAVIKPNSVIEGPVIIKSGSIVGPLAYIRPNTVLMENTFVGNSSEIKGSIILENTKIPHLSYVGDSIIGANCNFGCNTITANLRFDDKPVMVNIKGKPVKSVRKLGAIIGDNVKTGIQVSFMPGVKIGSNSLIGANCLIDNDIEQNSFVYKKDELVITKKRN.

The interval 1–204 is pyrophosphorylase; that stretch reads MDAIILCAGK…NGKLHGIELN (204 aa). Residues 6 to 9, Gln-74, and Gly-79 each bind UTP; that span reads LCAG. N-acetyl-alpha-D-glucosamine 1-phosphate-binding residues include Thr-80, Gly-130, Asn-142, and Asn-158. The segment at 205–224 is linker; the sequence is GYWNDIGHPWDVLSANNRFL. The segment at 225–411 is N-acetyltransferase; sequence NKIISKVSGK…DELVITKKRN (187 aa). Residue His-308 is the Proton acceptor of the active site. Acetyl-CoA is bound by residues Ala-384 and Lys-401.

This sequence in the N-terminal section; belongs to the N-acetylglucosamine-1-phosphate uridyltransferase family. The protein in the C-terminal section; belongs to the transferase hexapeptide repeat family.

It catalyses the reaction N-acetyl-alpha-D-glucosamine 1-phosphate + UTP + H(+) = UDP-N-acetyl-alpha-D-glucosamine + diphosphate. It carries out the reaction alpha-D-glucosamine 1-phosphate + acetyl-CoA = N-acetyl-alpha-D-glucosamine 1-phosphate + CoA + H(+). Its pathway is nucleotide-sugar biosynthesis; UDP-N-acetyl-alpha-D-glucosamine biosynthesis; N-acetyl-alpha-D-glucosamine 1-phosphate from alpha-D-glucosamine 6-phosphate (route II): step 2/2. It functions in the pathway nucleotide-sugar biosynthesis; UDP-N-acetyl-alpha-D-glucosamine biosynthesis; UDP-N-acetyl-alpha-D-glucosamine from N-acetyl-alpha-D-glucosamine 1-phosphate: step 1/1. Catalyzes the last two sequential reactions in the de novo biosynthetic pathway for UDP-N-acetyl-glucosamine (UDP-GlcNAc). Responsible for the acetylation of GlcN-1-P to GlcNAc-1-P, and for the uridyl transfer from UTP to GlcNAc-1-P, to produce UDP-GlcNAc and pyrophosphate. The chain is Bifunctional protein GlmU from Methanococcus maripaludis (strain C7 / ATCC BAA-1331).